The chain runs to 445 residues: Probable fructoselysine/psicoselysine transporter FrlA (445 aa).

A run of 12 helical transmembrane segments spans residues 10-30, 38-58, 93-113, 121-141, 155-175, 181-201, 236-256, 273-293, 334-354, 355-375, 389-410, and 417-435; these read LGFWAVLAIAVGTTVGSGIFV, AAGTPWLTVLAFVIGGLIVIP, GWASFWANDAPSLSIMALAIV, PIDPLLGKFIAAGLIIAFMLL, LITIAKIIPFTIVIGLGIFWF, AAPTTTAIGATGSFMALLAGI, CLLVLVLYTLLALVISGLMPF, IPALGSTAGIFVAITAMIVIL, IILQGALGIFFIFVSDLTSLL, GYFTLVMCFKNTLTFGSIIWC, AFGLMTTLAIASSLILVASTFV, and LICAVIVIATGLPAYAFWA.

The protein belongs to the amino acid-polyamine-organocation (APC) superfamily.

Its subcellular location is the cell inner membrane. It catalyses the reaction N(6)-(D-fructosyl)-L-lysine(in) = N(6)-(D-fructosyl)-L-lysine(out). The enzyme catalyses N(6)-(D-psicosyl)-L-lysine(in) = N(6)-(D-psicosyl)-L-lysine(out). The protein operates within carbohydrate metabolism; fructoselysine degradation. Functionally, is likely involved in the transport of fructoselysine and psicoselysine to the cytoplasm, where they are degraded. The protein is Probable fructoselysine/psicoselysine transporter FrlA of Escherichia coli (strain K12).